Consider the following 183-residue polypeptide: uncharacterized protein (183 aa).

It belongs to the asfivirus S183L family.

This is an uncharacterized protein from Ornithodoros (relapsing fever ticks).